Reading from the N-terminus, the 122-residue chain is Large ribosomal subunit protein eL18 (122 aa).

Belongs to the eukaryotic ribosomal protein eL18 family.

This chain is Large ribosomal subunit protein eL18, found in Thermoplasma volcanium (strain ATCC 51530 / DSM 4299 / JCM 9571 / NBRC 15438 / GSS1).